A 503-amino-acid polypeptide reads, in one-letter code: Arabinose import ATP-binding protein AraG 1 (503 aa).

2 ABC transporter domains span residues 5-240 and 253-497; these read LRFD…MVGR and LGDV…LPQG. 37 to 44 contacts ATP; that stretch reads GENGAGKS.

It belongs to the ABC transporter superfamily. Arabinose importer (TC 3.A.1.2.2) family. As to quaternary structure, the complex is composed of two ATP-binding proteins (AraG), two transmembrane proteins (AraH) and a solute-binding protein (AraF).

It localises to the cell inner membrane. It carries out the reaction L-arabinose(out) + ATP + H2O = L-arabinose(in) + ADP + phosphate + H(+). In terms of biological role, part of the ABC transporter complex AraFGH involved in arabinose import. Responsible for energy coupling to the transport system. In Burkholderia thailandensis (strain ATCC 700388 / DSM 13276 / CCUG 48851 / CIP 106301 / E264), this protein is Arabinose import ATP-binding protein AraG 1.